A 489-amino-acid chain; its full sequence is UDP-N-acetylmuramate--L-alanine ligase (489 aa).

G130–S136 lines the ATP pocket.

This sequence belongs to the MurCDEF family.

The protein resides in the cytoplasm. The enzyme catalyses UDP-N-acetyl-alpha-D-muramate + L-alanine + ATP = UDP-N-acetyl-alpha-D-muramoyl-L-alanine + ADP + phosphate + H(+). The protein operates within cell wall biogenesis; peptidoglycan biosynthesis. Its function is as follows. Cell wall formation. The chain is UDP-N-acetylmuramate--L-alanine ligase from Corynebacterium efficiens (strain DSM 44549 / YS-314 / AJ 12310 / JCM 11189 / NBRC 100395).